A 476-amino-acid chain; its full sequence is Cytosolic iron-sulfur assembly component 3 (476 aa).

Alanine 2 carries the post-translational modification N-acetylalanine. [4Fe-4S] cluster-binding residues include cysteine 24, cysteine 71, cysteine 74, cysteine 77, cysteine 190, and cysteine 246. A disordered region spans residues 297-316 (DGLTSSVSAEEPSSHRGGGS). Positions 395 and 399 each coordinate [4Fe-4S] cluster.

This sequence belongs to the NARF family. External component of the CIA complex. In the CIA complex, interacts directly with CIAO1 and MMS19.

Component of the cytosolic iron-sulfur protein assembly (CIA) complex, a multiprotein complex that mediates the incorporation of iron-sulfur cluster into extramitochondrial Fe/S proteins. Seems to negatively regulate the level of HIF1A expression, although this effect could be indirect. The protein is Cytosolic iron-sulfur assembly component 3 (Ciao3) of Mus musculus (Mouse).